The chain runs to 348 residues: Cyclin-dependent kinase inhibitor 1C (348 aa).

R109 is modified (omega-N-methylarginine). Residues 115 to 348 (VAVIPRSGPP…VEQTPRKRLR (234 aa)) form a disordered region. Composition is skewed to acidic residues over residues 207-220 (QGEE…DELG) and 227-274 (QGEE…QDEN). Over residues 275–284 (QEQRGQELKD) the composition is skewed to basic and acidic residues. The Nuclear localization signal signature appears at 309–312 (KRKR).

It belongs to the CDI family. As to quaternary structure, interacts with PCNA. As to expression, expressed in the heart, brain, lung, skeletal muscle, kidney, pancreas and testis. High levels are seen in the placenta while low levels are seen in the liver.

It localises to the nucleus. Functionally, potent tight-binding inhibitor of several G1 cyclin/CDK complexes (cyclin E-CDK2, cyclin D2-CDK4, and cyclin A-CDK2) and, to lesser extent, of the mitotic cyclin B-CDC2. Negative regulator of cell proliferation. May play a role in maintenance of the non-proliferative state throughout life. This chain is Cyclin-dependent kinase inhibitor 1C (Cdkn1c), found in Mus musculus (Mouse).